The sequence spans 428 residues: Cell number regulator 13 (428 aa).

Over residues 233-280 the composition is skewed to basic and acidic residues; that stretch reads PEKETNVKAPEKKGSNYSESKGETAKSFDDDDDYPKKQNGDYPKKQKD. Positions 233-290 are disordered; that stretch reads PEKETNVKAPEKKGSNYSESKGETAKSFDDDDDYPKKQNGDYPKKQKDTCSTQRCSSQ. The segment covering 281–290 has biased composition (polar residues); that stretch reads TCSTQRCSSQ. A helical transmembrane segment spans residues 354-370; it reads IMAYSLILSCCCYTCCV.

Expressed in roots, coleoptiles, leaves, stalks, apical meristems, immature ears, embryos, endosperm, pericarp, silks and tassel spikelets. Not detected in pollen.

The protein resides in the membrane. This chain is Cell number regulator 13 (CNR13), found in Zea mays (Maize).